We begin with the raw amino-acid sequence, 567 residues long: Geranylgeranyl transferase type-2 subunit alpha (567 aa).

PFTA repeat units follow at residues L44–V78, L88–E122, N124–V158, P159–P193, V207–P241, and V363–P397. Phosphoserine is present on S98. LRR repeat units lie at residues D442–L463, L464–R486, C487–P508, R509–A530, and R534–L555.

The protein belongs to the protein prenyltransferase subunit alpha family. In terms of assembly, heterotrimer composed of RABGGTA, RABGGTB and CHM; within this trimer, RABGGTA and RABGGTB form the catalytic component B, while CHM (component A) mediates peptide substrate binding. The Rab GGTase dimer (RGGT) interacts with CHM (component A) prior to Rab protein binding; the association is stabilized by geranylgeranyl pyrophosphate (GGpp). The CHM:RGGT:Rab complex is destabilized by GGpp. Interacts with non-phosphorylated form of RAB8A; phosphorylation of RAB8A disrupts this interaction.

The enzyme catalyses geranylgeranyl diphosphate + L-cysteinyl-[protein] = S-geranylgeranyl-L-cysteinyl-[protein] + diphosphate. With respect to regulation, the enzymatic reaction requires the aid of a Rab escort protein (also called component A), such as CHM. Catalyzes the transfer of a geranylgeranyl moiety from geranylgeranyl diphosphate to both cysteines of Rab proteins with the C-terminal sequence -XXCC, -XCXC and -CCXX, such as RAB1A, RAB3A, RAB5A and RAB7A. The sequence is that of Geranylgeranyl transferase type-2 subunit alpha (RABGGTA) from Sus scrofa (Pig).